Consider the following 493-residue polypeptide: Glutamate--tRNA ligase (493 aa).

The 'HIGH' region motif lies at 9–19; that stretch reads PSPTGDPHVGT. A 'KMSKS' region motif is present at residues 249-253; it reads KLSKR. K252 contacts ATP.

The protein belongs to the class-I aminoacyl-tRNA synthetase family. Glutamate--tRNA ligase type 1 subfamily. In terms of assembly, monomer.

The protein localises to the cytoplasm. The catalysed reaction is tRNA(Glu) + L-glutamate + ATP = L-glutamyl-tRNA(Glu) + AMP + diphosphate. Catalyzes the attachment of glutamate to tRNA(Glu) in a two-step reaction: glutamate is first activated by ATP to form Glu-AMP and then transferred to the acceptor end of tRNA(Glu). This chain is Glutamate--tRNA ligase, found in Marinobacter nauticus (strain ATCC 700491 / DSM 11845 / VT8) (Marinobacter aquaeolei).